A 229-amino-acid chain; its full sequence is Putative N-acetylmannosamine-6-phosphate 2-epimerase (229 aa).

Belongs to the NanE family.

It catalyses the reaction an N-acyl-D-glucosamine 6-phosphate = an N-acyl-D-mannosamine 6-phosphate. The protein operates within amino-sugar metabolism; N-acetylneuraminate degradation; D-fructose 6-phosphate from N-acetylneuraminate: step 3/5. Converts N-acetylmannosamine-6-phosphate (ManNAc-6-P) to N-acetylglucosamine-6-phosphate (GlcNAc-6-P). This Escherichia coli O7:K1 (strain IAI39 / ExPEC) protein is Putative N-acetylmannosamine-6-phosphate 2-epimerase.